The chain runs to 1290 residues: 1-phosphatidylinositol 4,5-bisphosphate phosphodiesterase gamma-1 (1290 aa).

Position 2 is an N-acetylalanine (alanine 2). The PH 1 domain maps to 27–142 (RSLEVGTVMT…WIKGLTWLME (116 aa)). Positions 152–187 (QIERWLRKQFYSVDRNREDRISAKDLKNMLSQVNYR) constitute an EF-hand domain. Ca(2+)-binding residues include aspartate 165, asparagine 167, glutamate 169, arginine 171, and aspartate 176. The 145-residue stretch at 320–464 (DTMNNPLSHY…LKRKILIKHK (145 aa)) folds into the PI-PLC X-box domain. Residues histidine 335 and histidine 380 contribute to the active site. In terms of domain architecture, PH 2; first part spans 489–523 (SIKNGILYLEDPVNHEWYPHYFVLTSSKIYYSEET). The residue at position 506 (tyrosine 506) is a Phosphotyrosine. A disordered region spans residues 522-544 (ETSSDQGNEDEEEPKEVSSSTEL). 2 SH2 domains span residues 550-657 (WFHG…SEPV) and 668-756 (WYHA…RYPI). Tyrosine 771 is subject to Phosphotyrosine; by SYK. A Phosphotyrosine modification is found at tyrosine 775. Tyrosine 783 carries the post-translational modification Phosphotyrosine; by ITK, SYK and TXK. The region spanning 791–851 (TFKCAVKALF…PSNYVEEMVN (61 aa)) is the SH3 domain. In terms of domain architecture, PH 2; second part spans 895–931 (FVFSISMASVAHWSLDVAADSQEELQDWVKKIREVAQ). Residues 953-1070 (LSELVVYCRP…GYVLQPSTMR (118 aa)) form the PI-PLC Y-box domain. The residue at position 977 (tyrosine 977) is a Phosphotyrosine. The 124-residue stretch at 1071-1194 (DEAFDPFDKS…TGYRAVPLKN (124 aa)) folds into the C2 domain. Phosphoserine occurs at positions 1221, 1222, 1227, 1233, and 1248. Tyrosine 1253 carries the post-translational modification Phosphotyrosine. Serine 1263 carries the phosphoserine modification. The interval 1271 to 1290 (FDSRERRAPRRTRVNGDNRL) is disordered.

In terms of assembly, interacts with AGAP2 via its SH3 domain. Interacts (via SH2 domain) with RET. Interacts with FLT1 (tyrosine-phosphorylated). Interacts (via SH2 domain) with FGFR1, FGFR2, FGFR3 and FGFR4 (phosphorylated). Interacts with LAT (phosphorylated) upon TCR activation. Interacts (via SH3 domain) with the Pro-rich domain of TNK1. Associates with BLNK, VAV1, GRB2 and NCK1 in a B-cell antigen receptor-dependent fashion. Interacts with CBLB in activated T-cells; which inhibits phosphorylation. Interacts with SHB. Interacts (via SH3 domain) with the Arg/Gly-rich-flanked Pro-rich domains of KHDRBS1/SAM68. This interaction is selectively regulated by arginine methylation of KHDRBS1/SAM68. Interacts with INPP5D/SHIP1, THEMIS and CLNK. Interacts with AXL, FLT4 and KIT. Interacts with RALGPS1. Interacts (via the SH2 domains) with VIL1 (phosphorylated at C-terminus tyrosine phosphorylation sites). Interacts (via SH2 domain) with PDGFRA and PDGFRB (tyrosine phosphorylated). Interacts with PIP5K1C. Interacts with NTRK1 and NTRK2 (phosphorylated upon ligand-binding). Interacts with SYK; activates PLCG1. Interacts with GRB2, LAT and THEMIS upon TCR activation in thymocytes. Interacts with TESPA1; the association is increased with prolonged stimulation of the TCR and may facilitate the assembly of the LAT signalosome. Interacts (via C-terminal proline-rich domain (PRD)) with PLCG1 (via SH3 domain); this interaction leads to guanine nucleotide exchange from PlCG1 to DNM1 and enhances DNM1-dependent endocytosis. As to quaternary structure, (Microbial infection) Interacts (via SH3 domain) with HEV ORF3 protein. Ca(2+) serves as cofactor. Post-translationally, tyrosine phosphorylated in response to signaling via activated FLT3, KIT and PDGFRA. Tyrosine phosphorylated by activated FGFR1, FGFR2, FGFR3 and FGFR4. Tyrosine phosphorylated by activated FLT1 and KDR. Tyrosine phosphorylated by activated PDGFRB. The receptor-mediated activation of PLCG1 involves its phosphorylation by tyrosine kinases, in response to ligation of a variety of growth factor receptors and immune system receptors. For instance, SYK phosphorylates and activates PLCG1 in response to ligation of the B-cell receptor. May be dephosphorylated by PTPRJ. Phosphorylated by ITK and TXK on Tyr-783 upon TCR activation in T-cells. In terms of processing, ubiquitinated by CBLB in activated T-cells.

Its subcellular location is the cell projection. The protein localises to the lamellipodium. It is found in the ruffle. The catalysed reaction is a 1,2-diacyl-sn-glycero-3-phospho-(1D-myo-inositol-4,5-bisphosphate) + H2O = 1D-myo-inositol 1,4,5-trisphosphate + a 1,2-diacyl-sn-glycerol + H(+). It carries out the reaction a 1,2-diacyl-sn-glycero-3-phospho-(1D-myo-inositol) + H2O = 1D-myo-inositol 1-phosphate + a 1,2-diacyl-sn-glycerol + H(+). Its activity is regulated as follows. Activated by phosphorylation on tyrosine residues. In terms of biological role, mediates the production of the second messenger molecules diacylglycerol (DAG) and inositol 1,4,5-trisphosphate (IP3). Plays an important role in the regulation of intracellular signaling cascades. Becomes activated in response to ligand-mediated activation of receptor-type tyrosine kinases, such as PDGFRA, PDGFRB, EGFR, FGFR1, FGFR2, FGFR3 and FGFR4. Plays a role in actin reorganization and cell migration. Guanine nucleotide exchange factor that binds the GTPase DNM1 and catalyzes the dissociation of GDP, allowing a GTP molecule to bind in its place, therefore enhancing DNM1-dependent endocytosis. The chain is 1-phosphatidylinositol 4,5-bisphosphate phosphodiesterase gamma-1 from Homo sapiens (Human).